The following is a 335-amino-acid chain: BTB and MATH domain-containing protein 39 (335 aa).

The region spanning 14–141 (MKTLCFKIMN…NGVFTIEFDL (128 aa)) is the MATH domain. The BTB domain occupies 161–226 (ADGKLIVEDQ…LQLDEFKVNV (66 aa)).

In Caenorhabditis briggsae, this protein is BTB and MATH domain-containing protein 39.